Reading from the N-terminus, the 564-residue chain is MAEAKDLFKEFKVQSVSEFFRRNAAMLGYTGKIRSLTTIIHEAVTNSLDACEEAGILPTIRVEIEELGKEHYKVIVEDNGPGIPEEYIPHVFGKMLAGTKAHRNIQSRGQQGIGISGAVMFAQITTGKPTRVITSTGGEIVEAWVKIDVQKNEGKIVKKVKHPNPKGWRGTRIEMEVKDVKYVRSRQGVYWYLKLTAIANPHAYIELVEPDGKLVVFPRSSEEIPKPPVEMKPHPKGVMVDDVYTMAHRSKRSSVKRFLVSEFSRISEKKIEELIKYVAAIRLLKSEQNEEIKEKLREKLINGDVDSVLRSFGRKWKKEVEKVAKIMEKPPEKLTWQEAEEIVEAFKLMKFLAPPTHGLRPIGEENIKRGLTGILKPEFVTAVTRSPKVYAGGIPFQVEVGLAYGGQISGSEILRYANRVPLLFDAGSCVITSAVRSIDWKRYKIDSFDSAPLVVLVNVISVHVPYTSTGKQSIADIEEIYNEIRLALMDAARKLALYLGGKYRRMYQIKRRKTLEKYLPEIARSLHILTGEPEEKIREYFLKLIESKIEVEEVESVEVEEAEA.

Residues Asn46, Asp78, Thr99 to Lys100, Gly109 to Ser116, and Lys471 each bind ATP.

Belongs to the TOP6B family. In terms of assembly, homodimer. Heterotetramer of two Top6A and two Top6B chains.

It catalyses the reaction ATP-dependent breakage, passage and rejoining of double-stranded DNA.. In terms of biological role, relaxes both positive and negative superturns and exhibits a strong decatenase activity. The polypeptide is Type 2 DNA topoisomerase 6 subunit B (Pyrococcus horikoshii (strain ATCC 700860 / DSM 12428 / JCM 9974 / NBRC 100139 / OT-3)).